Consider the following 154-residue polypeptide: Small ribosomal subunit protein bS6 (154 aa).

Residues 94 to 154 (VKQEGPLPTP…SSQGKESQKS (61 aa)) are disordered. The span at 103-112 (PRSSNKGYNQ) shows a compositional bias: polar residues. Over residues 113–139 (SEKKDIESIDSTNKSEFKEEANDKKTA) the composition is skewed to basic and acidic residues. Residues 140-154 (TSESTSSQGKESQKS) show a composition bias toward polar residues.

This sequence belongs to the bacterial ribosomal protein bS6 family.

Its function is as follows. Binds together with bS18 to 16S ribosomal RNA. This chain is Small ribosomal subunit protein bS6, found in Prochlorococcus marinus subsp. pastoris (strain CCMP1986 / NIES-2087 / MED4).